A 543-amino-acid polypeptide reads, in one-letter code: MSQPTDEADKSTGNAQVTHESINFANFNQDSTCVSVGYQSGYKIFNVEPFTKCLSLADTSIGIVEMLFSSSLVAIVGLGELPDSSPRKLKVFNTKRRSIICELTFPTSILAVKMNRERMVVLLEDTIYIYDINTMRILHTIETPSNPEGLIALSSSTENNILAYPSPPKLPNRQETSTKGTTNDNDRSHLENIPENVNANSSNLRNGDVIIFNSHTLQPISVIEAHKAQLSAIALSSDGTLLATASNKGTIVRVFDVETGVKLYQFRRGTYPTKIYCLSFSQDNRFVCASSATETVHIFRLGQDEANNTMPSRWSKNQKLALQRYKQSMKQXQGSKPSSLVDSDSDPDVDELVENDNSDDDELEEDIDDELAEERFNSSLTVPRRVSSTTSLGSYGSQESIGDKIEPHVDSARRSVARMIRRTSQSLGRKAAEKMGPYLHPKFSSLLEPNRHFASLKVPASKDTKTVVAIGNSVGQGELLQLGEHEDVDNSSSTSDSTFHQKLLHVMVVSSEGFFYNFGLDTERGGDCTLLSQYSLLTDVNDG.

The interval 163–200 is disordered; the sequence is AYPSPPKLPNRQETSTKGTTNDNDRSHLENIPENVNAN. Positions 173 to 183 are enriched in polar residues; sequence RQETSTKGTTN. WD repeat units follow at residues 225 to 265 and 270 to 309; these read AHKA…KLYQ and TYPT…ANNT. The L/FRRG motif signature appears at 266–270; it reads FRRGT. Residues 326-336 are compositionally biased toward polar residues; sequence KQSMKQXQGSK. The tract at residues 326–408 is disordered; sequence KQSMKQXQGS…ESIGDKIEPH (83 aa). Residues 343-372 are compositionally biased toward acidic residues; the sequence is SDSDPDVDELVENDNSDDDELEEDIDDELA. Polar residues predominate over residues 377 to 400; the sequence is NSSLTVPRRVSSTTSLGSYGSQES.

Belongs to the WD repeat PROPPIN family. Component of the PI(3,5)P2 regulatory complex.

It localises to the preautophagosomal structure membrane. The protein localises to the vacuole membrane. It is found in the endosome membrane. Its function is as follows. The PI(3,5)P2 regulatory complex regulates both the synthesis and turnover of phosphatidylinositol 3,5-bisphosphate (PtdIns(3,5)P2). Necessary for proper vacuole morphology. Plays an important role in osmotically-induced vacuole fragmentation. Involved in correct ATG9 trafficking to the pre-autophagosomal structure. Might also be involved in premeiotic DNA replication. Required for cytoplasm to vacuole transport (Cvt) vesicle formation, autophagy, glucose-induced micropexophagy and ethanol-induced macropexophagy. Required for the involution of the vacuole that occurs during micropexophagy. Involved in the recruitment of ATG2 to punctate structures when cells are grown on glucose. The polypeptide is Autophagy-related protein 18 (ATG18) (Komagataella pastoris (Yeast)).